Here is a 464-residue protein sequence, read N- to C-terminus: Serine protease PepD (464 aa).

A disordered region spans residues 1–71 (MAKLARVVGL…TQYRQPYEAL (71 aa)). At 1–100 (MAKLARVVGL…GMVRQRPRAG (100 aa)) the chain is on the cytoplasmic side. Residues 39 to 48 (QGQQQTYSQQ) are compositionally biased toward low complexity. The chain crosses the membrane as a helical span at residues 101–121 (MLAIGAVTIAVVSAGIGGAAA). Topologically, residues 122-464 (SLVGFNRAPA…VQVTLGKAEQ (343 aa)) are periplasmic. Catalysis depends on charge relay system residues H197, D236, and S317. In terms of domain architecture, PDZ spans 368–449 (LISTGKASHA…TVALTFQDPS (82 aa)).

The protein belongs to the peptidase S1C family. As to quaternary structure, homotrimer. Interacts with numerous proteins, including the 35 kDa antigen PspA.

The protein localises to the cell inner membrane. It localises to the secreted. Its subcellular location is the cell wall. The enzyme catalyses Acts on substrates that are at least partially unfolded. The cleavage site P1 residue is normally between a pair of hydrophobic residues, such as Val-|-Val.. Probably regulates its own activity by autocleavage, which removes the PDZ domain. Inhibited by the serine protease inhibitor diisopropylfluorophosphate (DFP). Inhibited by fluoroquinolone such as ciprofloxacin, moxifloxacin and ofloxacin and their analogs. In terms of biological role, required for virulence. Acts both as a protease, which degrades and/or refolds damaged substrate targets, and as a chaperone. Plays an important role in the stress response network mediated through the two-component regulatory system MprAB and SigE signaling networks. May utilize its PDZ domain to recognize and process misfolded proteins at the cell membrane, leading to activation of the MprAB and SigE signaling pathways and subsequent establishment of a positive feedback loop that facilitates bacterial adaptation. Interacts with and potentially cleaves several proteins, including the 35 kDa antigen PspA. Proteolytic cleavage of PspA may help to maintain cell envelope homeostasis in Mycobacterium and regulate specific stress response pathways during periods of extracytoplasmic stress. In vitro, exhibits proteolytic activity against the artificial substrate beta-casein. In Mycobacterium tuberculosis (strain ATCC 25618 / H37Rv), this protein is Serine protease PepD.